A 94-amino-acid chain; its full sequence is Large ribosomal subunit protein eL42 (94 aa).

Positions 11, 14, 71, and 74 each coordinate Zn(2+). The C4-type zinc finger occupies 11-74 (CPFCKRHTIH…LDLRFRCTVC (64 aa)).

The protein belongs to the eukaryotic ribosomal protein eL42 family. As to quaternary structure, part of the 50S ribosomal subunit. Zn(2+) is required as a cofactor.

In terms of biological role, binds to the 23S rRNA. This chain is Large ribosomal subunit protein eL42, found in Thermococcus kodakarensis (strain ATCC BAA-918 / JCM 12380 / KOD1) (Pyrococcus kodakaraensis (strain KOD1)).